Reading from the N-terminus, the 332-residue chain is Holliday junction branch migration complex subunit RuvB (332 aa).

The segment at 1 to 181 is large ATPase domain (RuvB-L); the sequence is MARILDNDVM…FGITGHMEYY (181 aa). ATP is bound by residues L20, R21, G62, K65, T66, T67, 128-130, R171, Y181, and R218; that span reads EDF. T66 is a binding site for Mg(2+). The segment at 182–252 is small ATPAse domain (RuvB-S); the sequence is QEKDLTEIVE…ITDRALTMLD (71 aa). The segment at 255–332 is head domain (RuvB-H); it reads REGLDYIDQK…RHLGYPYQNT (78 aa). DNA is bound by residues R291, R310, R312, and R315.

This sequence belongs to the RuvB family. In terms of assembly, homohexamer. Forms an RuvA(8)-RuvB(12)-Holliday junction (HJ) complex. HJ DNA is sandwiched between 2 RuvA tetramers; dsDNA enters through RuvA and exits via RuvB. An RuvB hexamer assembles on each DNA strand where it exits the tetramer. Each RuvB hexamer is contacted by two RuvA subunits (via domain III) on 2 adjacent RuvB subunits; this complex drives branch migration. In the full resolvosome a probable DNA-RuvA(4)-RuvB(12)-RuvC(2) complex forms which resolves the HJ.

It localises to the cytoplasm. The enzyme catalyses ATP + H2O = ADP + phosphate + H(+). Functionally, the RuvA-RuvB-RuvC complex processes Holliday junction (HJ) DNA during genetic recombination and DNA repair, while the RuvA-RuvB complex plays an important role in the rescue of blocked DNA replication forks via replication fork reversal (RFR). RuvA specifically binds to HJ cruciform DNA, conferring on it an open structure. The RuvB hexamer acts as an ATP-dependent pump, pulling dsDNA into and through the RuvAB complex. RuvB forms 2 homohexamers on either side of HJ DNA bound by 1 or 2 RuvA tetramers; 4 subunits per hexamer contact DNA at a time. Coordinated motions by a converter formed by DNA-disengaged RuvB subunits stimulates ATP hydrolysis and nucleotide exchange. Immobilization of the converter enables RuvB to convert the ATP-contained energy into a lever motion, pulling 2 nucleotides of DNA out of the RuvA tetramer per ATP hydrolyzed, thus driving DNA branch migration. The RuvB motors rotate together with the DNA substrate, which together with the progressing nucleotide cycle form the mechanistic basis for DNA recombination by continuous HJ branch migration. Branch migration allows RuvC to scan DNA until it finds its consensus sequence, where it cleaves and resolves cruciform DNA. In Streptococcus pyogenes serotype M12 (strain MGAS9429), this protein is Holliday junction branch migration complex subunit RuvB.